Here is a 954-residue protein sequence, read N- to C-terminus: Glycine dehydrogenase (decarboxylating) (954 aa).

Lys-702 is modified (N6-(pyridoxal phosphate)lysine).

This sequence belongs to the GcvP family. In terms of assembly, the glycine cleavage system is composed of four proteins: P, T, L and H. Pyridoxal 5'-phosphate serves as cofactor.

It carries out the reaction N(6)-[(R)-lipoyl]-L-lysyl-[glycine-cleavage complex H protein] + glycine + H(+) = N(6)-[(R)-S(8)-aminomethyldihydrolipoyl]-L-lysyl-[glycine-cleavage complex H protein] + CO2. In terms of biological role, the glycine cleavage system catalyzes the degradation of glycine. The P protein binds the alpha-amino group of glycine through its pyridoxal phosphate cofactor; CO(2) is released and the remaining methylamine moiety is then transferred to the lipoamide cofactor of the H protein. This is Glycine dehydrogenase (decarboxylating) from Xanthomonas euvesicatoria pv. vesicatoria (strain 85-10) (Xanthomonas campestris pv. vesicatoria).